The chain runs to 315 residues: Phosphomutase-like protein 3 (315 aa).

A signal peptide spans M1–T19. H77 acts as the Tele-phosphohistidine intermediate in catalysis. Residues N88 and N154 are each glycosylated (N-linked (GlcNAc...) asparagine). E173 serves as the catalytic Proton donor/acceptor. N185 carries N-linked (GlcNAc...) asparagine glycosylation. A lipid anchor (GPI-anchor amidated asparagine) is attached at N286. Residues D287–A315 constitute a propeptide, removed in mature form.

The protein belongs to the phosphoglycerate mutase family.

The protein localises to the cell membrane. The sequence is that of Phosphomutase-like protein 3 (PGA12) from Candida albicans (strain SC5314 / ATCC MYA-2876) (Yeast).